The primary structure comprises 419 residues: Monooxygenase CTB7 (419 aa).

Belongs to the aromatic-ring hydroxylase family. KMO subfamily.

Its pathway is mycotoxin biosynthesis. Functionally, monooxygenase; part of the gene cluster that mediates the biosynthesis of cercosporin, a light-activated, non-host-selective toxin. The perylenequinone chromophore of cercosporin absorbs light energy to attain an electronically-activated triplet state and produces active oxygen species such as the hydroxyl radical, superoxide, hydrogen peroxide or singlet oxygen upon reaction with oxygen molecules. These reactive oxygen species cause damage to various cellular components including lipids, proteins and nucleic acids. The first step of cercosporin biosynthesis is performed by the polyketide synthase CTB1 which catalyzes the formation of nor-toralactone. The starter unit acyltransferase (SAT) domain of CTB1 initiates polyketide extension by the selective utilization of acetyl-CoA, which is elongated to the heptaketide in the beta-ketoacyl synthase (KS) domain by successive condensations with six malonyl units introduced by the malonyl acyltransferase (MAT) domain. The product template (PT) domain catalyzes C4-C9 and C2-C11 aldol cyclizations and dehydrations to a trihydroxynaphthalene, which is thought to be delivered to the thioesterase (TE) domain for product release. The bifunctional enzyme CTB3 then methylates nor-toralactone to toralactone before conducting an unusual oxidative aromatic ring opening. The O-methyltransferase CTB2 further methylates the nascent OH-6 of the CBT3 product, blocking further oxidation at this site before the reductase CTB6 reduces the 2-oxopropyl ketone at position C7, giving naphthalene. The FAD-dependent monooxygenase CTB5 in concert with the multicopper oxidase CTB12 are responsible for homodimerization of naphthalene with CTB7 installing the dioxepine moiety, finally producing cercosporin. The fasciclin domain-containing protein CTB11 might act with CTB5 and CTB12 whereas the roles of CTB9 and CTB10 have still to be elucidated. The sequence is that of Monooxygenase CTB7 from Cercospora beticola (Sugarbeet leaf spot fungus).